The chain runs to 321 residues: Methionine import ATP-binding protein MetN (321 aa).

An ABC transporter domain is found at 2–237; it reads ISIKNVNKYY…NTKGLRKLIG (236 aa). 34-41 is a binding site for ATP; sequence GHSGAGKS.

Belongs to the ABC transporter superfamily. Methionine importer (TC 3.A.1.24) family. As to quaternary structure, the complex is composed of two ATP-binding proteins (MetN), two transmembrane proteins (MetI) and a solute-binding protein (MetQ).

The protein localises to the cell membrane. The enzyme catalyses L-methionine(out) + ATP + H2O = L-methionine(in) + ADP + phosphate + H(+). It carries out the reaction D-methionine(out) + ATP + H2O = D-methionine(in) + ADP + phosphate + H(+). In terms of biological role, part of the ABC transporter complex MetNIQ involved in methionine import. Responsible for energy coupling to the transport system. In Clostridioides difficile (strain 630) (Peptoclostridium difficile), this protein is Methionine import ATP-binding protein MetN.